We begin with the raw amino-acid sequence, 124 residues long: MAIIIAIIAAVIVIAALITFNVRNASPGPEKQEATDRIAPPEEEKNEAHYPAEARAAEHTPSVVKNDSPKEKRDTMGDDIYRQALQKFKHSDEVHAEEEVTEESDKMQDRSYRDALLSMKNKKK.

A helical transmembrane segment spans residues 2 to 22 (AIIIAIIAAVIVIAALITFNV). Positions 24–124 (NASPGPEKQE…ALLSMKNKKK (101 aa)) are disordered. Composition is skewed to basic and acidic residues over residues 30–58 (EKQEATDRIAPPEEEKNEAHYPAEARAAE), 67–81 (DSPKEKRDTMGDDIY), and 89–113 (KHSDEVHAEEEVTEESDKMQDRSYR).

It localises to the membrane. This is an uncharacterized protein from Bacillus subtilis (strain 168).